The primary structure comprises 307 residues: MRDPINYNAFTREQWQQFSADATLPLTQESLRQIKAFNDRISLQDVQDIYIPLVHLVHLEFDHYRQLQRDKATFLKQPQQRVPFIIGIAGSVAVGKSTAARLLEVLLNHYFTDQRIQLITTDGFLYSNEELKKRNLMARKGFPESYDMTALIQFLNDVKAGKELIKAPVYSHKVYDIVPDQFDYIMHPDVLIVEGINTLQLPTNEQIYVSDFTDFSIYVDADPTLIESWFLERFELLLATAFQDPTNYYYPYAIGDHDEAIAKSKRVWRDIDLKNLEEYILPTRNRADMIIHKTFGHRIDRLLLRKY.

90–97 (GSVAVGKS) contacts ATP.

Belongs to the prokaryotic pantothenate kinase family.

The protein localises to the cytoplasm. The enzyme catalyses (R)-pantothenate + ATP = (R)-4'-phosphopantothenate + ADP + H(+). It participates in cofactor biosynthesis; coenzyme A biosynthesis; CoA from (R)-pantothenate: step 1/5. In Levilactobacillus brevis (strain ATCC 367 / BCRC 12310 / CIP 105137 / JCM 1170 / LMG 11437 / NCIMB 947 / NCTC 947) (Lactobacillus brevis), this protein is Pantothenate kinase.